The primary structure comprises 217 residues: Small ribosomal subunit protein uS3c (217 aa).

The region spanning 47 to 119 (VRTHIKSSSN…KLHIAIEKVA (73 aa)) is the KH type-2 domain.

It belongs to the universal ribosomal protein uS3 family. As to quaternary structure, part of the 30S ribosomal subunit.

It is found in the plastid. The protein localises to the chloroplast. This is Small ribosomal subunit protein uS3c (rps3) from Pinus koraiensis (Korean pine).